We begin with the raw amino-acid sequence, 131 residues long: Small ribosomal subunit protein uS10m (131 aa).

Belongs to the universal ribosomal protein uS10 family.

The protein resides in the mitochondrion. The polypeptide is Small ribosomal subunit protein uS10m (mrps10) (Dictyostelium discoideum (Social amoeba)).